The chain runs to 1068 residues: Putative protein TIC 214 N-terminal part (1068 aa).

6 helical membrane-spanning segments follow: residues V11 to I31, I68 to I88, L92 to I112, I131 to L151, F166 to L186, and F213 to I233.

The protein belongs to the TIC214 family. Part of the Tic complex.

It is found in the plastid. The protein localises to the chloroplast inner membrane. Its function is as follows. Involved in protein precursor import into chloroplasts. May be part of an intermediate translocation complex acting as a protein-conducting channel at the inner envelope. This Marchantia polymorpha (Common liverwort) protein is Putative protein TIC 214 N-terminal part.